The sequence spans 141 residues: Hemoglobin subunit alpha (141 aa).

The Globin domain maps to 1–141; that stretch reads VLSPADKTNI…VSTVLTSKYR (141 aa). Residue serine 3 is modified to Phosphoserine. N6-succinyllysine is present on lysine 7. Threonine 8 carries the phosphothreonine modification. Lysine 11 bears the N6-succinyllysine mark. Position 16 is an N6-acetyllysine; alternate (lysine 16). Lysine 16 bears the N6-succinyllysine; alternate mark. Residue tyrosine 24 is modified to Phosphotyrosine. Serine 35 is subject to Phosphoserine. Lysine 40 is modified (N6-succinyllysine). Serine 49 carries the phosphoserine modification. Histidine 58 provides a ligand contact to O2. Residue histidine 87 participates in heme b binding. Residue serine 102 is modified to Phosphoserine. Phosphothreonine is present on threonine 108. Serine 124 is modified (phosphoserine). Phosphothreonine occurs at positions 134 and 137. Serine 138 is subject to Phosphoserine.

It belongs to the globin family. Heterotetramer of two alpha chains and two beta chains. In terms of tissue distribution, red blood cells.

Functionally, involved in oxygen transport from the lung to the various peripheral tissues. In terms of biological role, hemopressin acts as an antagonist peptide of the cannabinoid receptor CNR1. Hemopressin-binding efficiently blocks cannabinoid receptor CNR1 and subsequent signaling. In Chrysocyon brachyurus (Maned wolf), this protein is Hemoglobin subunit alpha (HBA).